Reading from the N-terminus, the 252-residue chain is tRNA pseudouridine synthase A (252 aa).

The active-site Nucleophile is the Asp-51. Residue Tyr-105 participates in substrate binding.

It belongs to the tRNA pseudouridine synthase TruA family.

It catalyses the reaction uridine(38/39/40) in tRNA = pseudouridine(38/39/40) in tRNA. Its function is as follows. Formation of pseudouridine at positions 38, 39 and 40 in the anticodon stem and loop of transfer RNAs. The chain is tRNA pseudouridine synthase A from Thermoplasma acidophilum (strain ATCC 25905 / DSM 1728 / JCM 9062 / NBRC 15155 / AMRC-C165).